Reading from the N-terminus, the 589-residue chain is Bifunctional protein TrpGD (589 aa).

Positions 46-241 constitute a Glutamine amidotransferase type-1 domain; it reads RVIVIDNYDS…LNIQDIQVKK (196 aa). 99-101 lines the L-glutamine pocket; the sequence is GPG. The active-site Nucleophile; for GATase activity is the Cys-126. Residues Gln-130 and 176-177 each bind L-glutamine; that span reads SL. Catalysis depends on for GATase activity residues His-215 and Glu-217. Positions 253 to 589 are anthranilate phosphoribosyltransferase; that stretch reads ALKKLVEFED…MDYQKTLGNS (337 aa).

This sequence in the C-terminal section; belongs to the anthranilate phosphoribosyltransferase family. Heterotetramer consisting of two non-identical subunits: a beta subunit (TrpG) and a large alpha subunit (TrpE).

The enzyme catalyses chorismate + L-glutamine = anthranilate + pyruvate + L-glutamate + H(+). It catalyses the reaction N-(5-phospho-beta-D-ribosyl)anthranilate + diphosphate = 5-phospho-alpha-D-ribose 1-diphosphate + anthranilate. It functions in the pathway amino-acid biosynthesis; L-tryptophan biosynthesis; L-tryptophan from chorismate: step 1/5. The protein operates within amino-acid biosynthesis; L-tryptophan biosynthesis; L-tryptophan from chorismate: step 2/5. Functionally, part of a heterotetrameric complex that catalyzes the two-step biosynthesis of anthranilate, an intermediate in the biosynthesis of L-tryptophan. In the first step, the glutamine-binding beta subunit (TrpG) of anthranilate synthase (AS) provides the glutamine amidotransferase activity which generates ammonia as a substrate that, along with chorismate, is used in the second step, catalyzed by the large alpha subunit of AS (TrpE) to produce anthranilate. In the absence of TrpG, TrpE can synthesize anthranilate directly from chorismate and high concentrations of ammonia. In addition to synthesizing anthranilate, it also catalyzes the second step of the pathway, the transfer of the phosphoribosyl group of 5-phosphorylribose-1-pyrophosphate (PRPP) to anthranilate. The chain is Bifunctional protein TrpGD (trpGD) from Thermotoga maritima (strain ATCC 43589 / DSM 3109 / JCM 10099 / NBRC 100826 / MSB8).